A 359-amino-acid polypeptide reads, in one-letter code: S-adenosylmethionine-dependent nucleotide dehydratase RSAD2 (359 aa).

Residues 43-67 are disordered; the sequence is QTPARKISRPESRTSKQKEGSRAPF. A compositionally biased stretch (basic and acidic residues) spans 50–63; that stretch reads SRPESRTSKQKEGS. The Radical SAM core domain occupies 67-287; sequence FTTPSSVNYH…LERHQSIQCL (221 aa). Residues Cys81, Cys85, and Cys88 each contribute to the [4Fe-4S] cluster site.

It belongs to the radical SAM superfamily. RSAD2 family. [4Fe-4S] cluster serves as cofactor.

The protein localises to the endoplasmic reticulum membrane. Its function is as follows. Interferon-inducible iron-sulfur (4FE-4S) cluster-binding antiviral protein which plays a major role in the cell antiviral state induced by type I and type II interferon. The polypeptide is S-adenosylmethionine-dependent nucleotide dehydratase RSAD2 (Danio rerio (Zebrafish)).